Here is a 350-residue protein sequence, read N- to C-terminus: Hydroxymethylglutaryl-CoA synthase (350 aa).

E83 acts as the Proton donor/acceptor in catalysis. Residue C115 is the Acyl-thioester intermediate of the active site. C115 and T156 together coordinate (3S)-3-hydroxy-3-methylglutaryl-CoA. R204 serves as a coordination point for CoA. 2 residues coordinate (3S)-3-hydroxy-3-methylglutaryl-CoA: T206 and H239. Catalysis depends on H239, which acts as the Proton donor/acceptor. K244 provides a ligand contact to CoA. (3S)-3-hydroxy-3-methylglutaryl-CoA-binding residues include N271 and S301.

Belongs to the thiolase-like superfamily. Archaeal HMG-CoA synthase family. In terms of assembly, interacts with acetoacetyl-CoA thiolase that catalyzes the precedent step in the pathway and with a DUF35 protein. The acetoacetyl-CoA thiolase/HMG-CoA synthase complex channels the intermediate via a fused CoA-binding site, which allows for efficient coupling of the endergonic thiolase reaction with the exergonic HMGCS reaction.

It catalyses the reaction acetoacetyl-CoA + acetyl-CoA + H2O = (3S)-3-hydroxy-3-methylglutaryl-CoA + CoA + H(+). The protein operates within metabolic intermediate biosynthesis; (R)-mevalonate biosynthesis; (R)-mevalonate from acetyl-CoA: step 2/3. Functionally, catalyzes the condensation of acetyl-CoA with acetoacetyl-CoA to form 3-hydroxy-3-methylglutaryl-CoA (HMG-CoA). Functions in the mevalonate (MVA) pathway leading to isopentenyl diphosphate (IPP), a key precursor for the biosynthesis of isoprenoid compounds that are building blocks of archaeal membrane lipids. In Thermococcus gammatolerans (strain DSM 15229 / JCM 11827 / EJ3), this protein is Hydroxymethylglutaryl-CoA synthase.